The chain runs to 185 residues: Superoxide dismutase [Cu-Zn] (185 aa).

Positions 1–18 (MTAFYKLCGMSMLSLVLA) are cleaved as a signal peptide. Histidine 85, histidine 87, and histidine 102 together coordinate Cu cation. Cysteine 92 and cysteine 180 are joined by a disulfide. 4 residues coordinate Zn(2+): histidine 102, histidine 111, histidine 120, and aspartate 123. Histidine 158 is a Cu cation binding site.

The protein belongs to the Cu-Zn superoxide dismutase family. Homodimer. Cu cation is required as a cofactor. It depends on Zn(2+) as a cofactor.

The protein localises to the periplasm. The enzyme catalyses 2 superoxide + 2 H(+) = H2O2 + O2. In terms of biological role, destroys radicals which are normally produced within the cells and which are toxic to biological systems. The protein is Superoxide dismutase [Cu-Zn] (sodC) of Francisella tularensis subsp. holarctica (strain LVS).